Consider the following 448-residue polypeptide: Glutamyl-tRNA(Gln) amidotransferase subunit D (448 aa).

Positions 92–423 constitute an Asparaginase/glutaminase domain; sequence SEVKIISTGG…DKIRSLMLTN (332 aa). Residues threonine 102, threonine 178, aspartate 179, and lysine 257 contribute to the active site.

Belongs to the asparaginase 1 family. GatD subfamily. As to quaternary structure, heterodimer of GatD and GatE.

It carries out the reaction L-glutamyl-tRNA(Gln) + L-glutamine + ATP + H2O = L-glutaminyl-tRNA(Gln) + L-glutamate + ADP + phosphate + H(+). In terms of biological role, allows the formation of correctly charged Gln-tRNA(Gln) through the transamidation of misacylated Glu-tRNA(Gln) in organisms which lack glutaminyl-tRNA synthetase. The reaction takes place in the presence of glutamine and ATP through an activated gamma-phospho-Glu-tRNA(Gln). The GatDE system is specific for glutamate and does not act on aspartate. The chain is Glutamyl-tRNA(Gln) amidotransferase subunit D from Sulfurisphaera tokodaii (strain DSM 16993 / JCM 10545 / NBRC 100140 / 7) (Sulfolobus tokodaii).